Reading from the N-terminus, the 239-residue chain is Sugar fermentation stimulation protein homolog (239 aa).

It belongs to the SfsA family.

This is Sugar fermentation stimulation protein homolog from Sinorhizobium medicae (strain WSM419) (Ensifer medicae).